A 276-amino-acid chain; its full sequence is Large ribosomal subunit protein uL2 (276 aa).

Residues 224 to 276 form a disordered region; sequence VMNPVDHPHGGGEGKAPIGRKSPMTPWGKPTLGFKTRKKKNKSDKFIIRRRKK. Over residues 258–276 the composition is skewed to basic residues; the sequence is KTRKKKNKSDKFIIRRRKK.

The protein belongs to the universal ribosomal protein uL2 family. Part of the 50S ribosomal subunit. Forms a bridge to the 30S subunit in the 70S ribosome.

Its function is as follows. One of the primary rRNA binding proteins. Required for association of the 30S and 50S subunits to form the 70S ribosome, for tRNA binding and peptide bond formation. It has been suggested to have peptidyltransferase activity; this is somewhat controversial. Makes several contacts with the 16S rRNA in the 70S ribosome. This Geobacillus sp. (strain WCH70) protein is Large ribosomal subunit protein uL2.